The chain runs to 141 residues: Lutropin subunit beta (141 aa).

The first 20 residues, 1-20 (MERLQGLLLWLLLSPSVVWA), serve as a signal peptide directing secretion. 6 disulfides stabilise this stretch: cysteine 29–cysteine 77, cysteine 43–cysteine 92, cysteine 46–cysteine 130, cysteine 54–cysteine 108, cysteine 58–cysteine 110, and cysteine 113–cysteine 120. A glycan (N-linked (GlcNAc...) asparagine) is linked at asparagine 33.

This sequence belongs to the glycoprotein hormones subunit beta family. Heterodimer of a common alpha chain and a unique beta chain which confers biological specificity to thyrotropin, lutropin, follitropin and gonadotropin.

It is found in the secreted. Promotes spermatogenesis and ovulation by stimulating the testes and ovaries to synthesize steroids. The protein is Lutropin subunit beta (Lhb) of Rattus norvegicus (Rat).